The chain runs to 212 residues: Probable plastid-lipid-associated protein 11, chloroplastic (212 aa).

The N-terminal 25 residues, 1 to 25, are a transit peptide targeting the chloroplast; sequence MALALSLSACSPPLRRTRRAGFRTS.

The protein belongs to the PAP/fibrillin family.

Its subcellular location is the plastid. The protein resides in the chloroplast thylakoid. This Arabidopsis thaliana (Mouse-ear cress) protein is Probable plastid-lipid-associated protein 11, chloroplastic (PAP11).